The primary structure comprises 600 residues: Probable translation initiation factor IF-2 (600 aa).

One can recognise a tr-type G domain in the interval 10–227; sequence LRQPIVVVLG…LLAGLTQRYL (218 aa). Residues 19-26 form a G1 region; that stretch reads GHVDHGKT. 19 to 26 serves as a coordination point for GTP; sequence GHVDHGKT. Positions 44–48 are G2; sequence EMTQE. Residues 83–86 are G3; sequence DTPG. Residues 83–87 and 137–140 contribute to the GTP site; these read DTPGH and NKID. Positions 137-140 are G4; that stretch reads NKID. The segment at 205 to 207 is G5; it reads SAK.

This sequence belongs to the TRAFAC class translation factor GTPase superfamily. Classic translation factor GTPase family. IF-2 subfamily.

Function in general translation initiation by promoting the binding of the formylmethionine-tRNA to ribosomes. Seems to function along with eIF-2. The polypeptide is Probable translation initiation factor IF-2 (Saccharolobus solfataricus (strain ATCC 35092 / DSM 1617 / JCM 11322 / P2) (Sulfolobus solfataricus)).